The chain runs to 146 residues: uncharacterized protein (146 aa).

A helical membrane pass occupies residues 7–27; that stretch reads FVLSITIVLVILIIIAYIWYN.

It belongs to the asfivirus E146L family.

The protein localises to the host membrane. Its subcellular location is the virion. This is an uncharacterized protein from Ornithodoros (relapsing fever ticks).